The sequence spans 345 residues: High mobility group protein 20A (345 aa).

Disordered regions lie at residues 1–130 (MEST…PFPE) and 166–206 (QKYQ…EKES). Composition is skewed to polar residues over residues 22 to 38 (NNQP…SSQA) and 57 to 67 (LHQSGEQQLGN). The segment covering 80–94 (ARRGGWNKGRKRKRS) has biased composition (basic residues). Positions 101–169 (PKAPLTGYVR…RYTKELQKYQ (69 aa)) form a DNA-binding region, HMG box. A compositionally biased stretch (basic and acidic residues) spans 112-125 (MNERREQLRTERPD). The span at 167–178 (KYQNTDAYQTYS) shows a compositional bias: polar residues. A compositionally biased stretch (basic residues) spans 179 to 189 (RKAKSRQKGRQ). Residues 227 to 285 (SKAREAELRQLRKSNMEFEERNAALQKHVESMRSAVQRLEAELSQEHERNSLLQQHLQS) adopt a coiled-coil conformation.

The protein resides in the nucleus. Its function is as follows. Plays a role in neuronal differentiation. In Xenopus laevis (African clawed frog), this protein is High mobility group protein 20A (hmg20a).